The following is a 216-amino-acid chain: NKG2-D type II integral membrane protein (216 aa).

At 1–51 (MGWIRGRRSRHSWEMSEFHNYNLDLKKSDFSTRWQKQRCPVVKSKCRENAS) the chain is on the cytoplasmic side. The helical; Signal-anchor for type II membrane protein transmembrane segment at 52–72 (PFFFCCFIAVAMGIRFIIMVT) threads the bilayer. The Extracellular segment spans residues 73–216 (IWSAVFLNSL…NTYICMQRTV (144 aa)). Cystine bridges form between Cys-96–Cys-105 and Cys-99–Cys-110. Positions 98 to 213 (PCPKNWICYK…STPNTYICMQ (116 aa)) constitute a C-type lectin domain. 4 N-linked (GlcNAc...) asparagine glycosylation sites follow: Asn-115, Asn-131, Asn-163, and Asn-202. Intrachain disulfides connect Cys-127–Cys-211 and Cys-189–Cys-203.

Homodimer; disulfide-linked. Heterohexamer composed of two subunits of KLRK1 and four subunits of HCST/DAP10. Interacts (via transmembrane domain) with HCST/DAP10 (via transmembrane domain); the interaction is required for KLRK1 NK cell surface and induces NK cell-mediated cytotoxicity. Can form disulfide-bonded heterodimer with CD94. Interacts with CEACAM1; recruits PTPN6 that dephosphorylates VAV1. As to expression, natural killer cells.

The protein resides in the cell membrane. Functionally, functions as an activating and costimulatory receptor involved in immunosurveillance upon binding to various cellular stress-inducible ligands displayed at the surface of autologous tumor cells and virus-infected cells. Provides both stimulatory and costimulatory innate immune responses on activated killer (NK) cells, leading to cytotoxic activity. Acts as a costimulatory receptor for T-cell receptor (TCR) in CD8(+) T-cell-mediated adaptive immune responses by amplifying T-cell activation. Stimulates perforin-mediated elimination of ligand-expressing tumor cells. Signaling involves calcium influx, culminating in the expression of TNF-alpha. Participates in NK cell-mediated bone marrow graft rejection. May play a regulatory role in differentiation and survival of NK cells. Binds to ligands belonging to various subfamilies of MHC class I-related glycoproteins. The polypeptide is NKG2-D type II integral membrane protein (KLRK1) (Pan troglodytes (Chimpanzee)).